We begin with the raw amino-acid sequence, 499 residues long: Rhamnogalacturonate lyase A (499 aa).

The signal sequence occupies residues 1 to 20 (MLSKTSLLSLLSLAAGVVNA). Intrachain disulfides connect Cys-49–Cys-92 and Cys-183–Cys-192.

The protein belongs to the polysaccharide lyase 4 family.

It is found in the secreted. The catalysed reaction is Endotype eliminative cleavage of L-alpha-rhamnopyranosyl-(1-&gt;4)-alpha-D-galactopyranosyluronic acid bonds of rhamnogalacturonan I domains in ramified hairy regions of pectin leaving L-rhamnopyranose at the reducing end and 4-deoxy-4,5-unsaturated D-galactopyranosyluronic acid at the non-reducing end.. Functionally, pectinolytic enzymes consist of four classes of enzymes: pectin lyase, polygalacturonase, pectin methylesterase and rhamnogalacturonase. Degrades the rhamnogalacturonan I (RG-I) backbone of pectin. The polypeptide is Rhamnogalacturonate lyase A (rglA) (Aspergillus niger).